Reading from the N-terminus, the 190-residue chain is Potassium-transporting ATPase KdpC subunit (190 aa).

A helical membrane pass occupies residues 13–33; that stretch reads VGFLLLTLVCGVIYPGVVTII.

The protein belongs to the KdpC family. In terms of assembly, the system is composed of three essential subunits: KdpA, KdpB and KdpC.

The protein resides in the cell membrane. Part of the high-affinity ATP-driven potassium transport (or Kdp) system, which catalyzes the hydrolysis of ATP coupled with the electrogenic transport of potassium into the cytoplasm. This subunit acts as a catalytic chaperone that increases the ATP-binding affinity of the ATP-hydrolyzing subunit KdpB by the formation of a transient KdpB/KdpC/ATP ternary complex. In Listeria innocua serovar 6a (strain ATCC BAA-680 / CLIP 11262), this protein is Potassium-transporting ATPase KdpC subunit.